A 436-amino-acid polypeptide reads, in one-letter code: Mitochondrial substrate carrier family protein Y (436 aa).

Positions 1-102 are disordered; the sequence is MENNNKNINT…NINNNNINKK (102 aa). Over 1–137 the chain is Mitochondrial intermembrane; that stretch reads MENNNKNINT…GGFLAGLSRN (137 aa). Solcar repeat units lie at residues 135–226 and 236–334; these read SRNV…TLKY and HDTL…LKKQ. A helical transmembrane segment spans residues 138–158; the sequence is VTRIIGSFSSGMAEESAGYPL. Topologically, residues 159–194 are mitochondrial matrix; that stretch reads DLIKTRIQLSQSGVSGGGGTNTSIIKIFKDVIKTEG. A helical membrane pass occupies residues 195 to 215; sequence VIGLFKGLSSPLILSALVTAI. At 216 to 238 the chain is on the mitochondrial intermembrane side; sequence QFGLFEDTLKYFRKHQYFKNHDT. The chain crosses the membrane as a helical span at residues 239-259; the sequence is LSLLFSGSIAGFAQSFITCPV. Residues 260–313 lie on the Mitochondrial matrix side of the membrane; that stretch reads DLVKIQMQIQGIPSSQPNSNNNNNNNKAKGNSYFTKLIYREKGLLGFYQGLSPT. Residues 314–334 traverse the membrane as a helical segment; it reads LFRDVPGLAIFFTTYETLKKQ. Topologically, residues 335–347 are mitochondrial intermembrane; that stretch reads FGQPELSTQSPTE. The helical transmembrane segment at 348 to 368 threads the bilayer; sequence FIKSFIPIVLSGGSAGVFYHG. The Solcar 3 repeat unit spans residues 350–436; sequence KSFIPIVLSG…FLVYEMVINL (87 aa). The Mitochondrial matrix segment spans residues 369–413; that stretch reads LTHPFDIAKTLIQSDRSATKYKGTFDCLKQVYQNQGPKSLFKGFS. Residues 414-434 traverse the membrane as a helical segment; the sequence is AVAIKSFQSNAVGFLVYEMVI. Topologically, residues 435-436 are mitochondrial intermembrane; that stretch reads NL.

This sequence belongs to the mitochondrial carrier (TC 2.A.29) family.

The protein resides in the mitochondrion inner membrane. Functionally, mitochondrial solute carriers shuttle metabolites, nucleotides, and cofactors through the mitochondrial inner membrane. This Dictyostelium discoideum (Social amoeba) protein is Mitochondrial substrate carrier family protein Y (mcfY).